The sequence spans 151 residues: Regulatory protein RecX (151 aa).

It belongs to the RecX family.

It localises to the cytoplasm. Its function is as follows. Modulates RecA activity. This is Regulatory protein RecX from Actinobacillus pleuropneumoniae serotype 5b (strain L20).